The sequence spans 231 residues: LexA repressor (231 aa).

A DNA-binding region (H-T-H motif) is located at residues 28-48; sequence IREIGEALDIRSTNGVNDHLK. Catalysis depends on for autocatalytic cleavage activity residues serine 149 and lysine 186.

The protein belongs to the peptidase S24 family. As to quaternary structure, homodimer.

It catalyses the reaction Hydrolysis of Ala-|-Gly bond in repressor LexA.. In terms of biological role, represses a number of genes involved in the response to DNA damage (SOS response), including recA and lexA. In the presence of single-stranded DNA, RecA interacts with LexA causing an autocatalytic cleavage which disrupts the DNA-binding part of LexA, leading to derepression of the SOS regulon and eventually DNA repair. The chain is LexA repressor from Anaeromyxobacter sp. (strain Fw109-5).